The sequence spans 606 residues: Maternal effect protein oskar (606 aa).

Residues 152-221 form the HTH OST-type domain; it reads EYPDIDSEVR…SGKRIFNLKA (70 aa). Phosphoserine is present on residues Ser-270 and Ser-275. Residues 425-439 form a leucine-zipper region; the sequence is LMGDDFMLYLARMEL.

As to quaternary structure, interacts with smaug (smg). Interacts with yl/yolkless. In terms of tissue distribution, begins to accumulate at the posterior pole of the oocyte from stage 8 onwards.

It is found in the endosome. Its function is as follows. Organizes the germ plasm and directs localization of the posterior determinant nanos. Oskar protein is required to keep nanos (nos) RNA and staufen protein at the posterior pole. This chain is Maternal effect protein oskar (osk), found in Drosophila melanogaster (Fruit fly).